We begin with the raw amino-acid sequence, 663 residues long: MGRYRIRVATGAWLFSGSYNRVQLWLVGTRGEAELELQLRPARGEEEEFDHDVAEDLGLLQFVRLRKHHWLVDDAWFCDRITVQGPGACAEVAFPCYRWVQGEDILSLPEGTARLPGDNALDMFQKHREKELKDRQQIYCWATWKEGLPLTIAADRKDDLPPNMRFHEEKRLDFEWTLKAGALEMALKRVYTLLSSWNCLEDFDQIFWGQKSALAEKVRQCWQDDELFSYQFLNGANPMLLRRSTSLPSRLVLPSGMEELQAQLEKELQNGSLFEADFILLDGIPANVIRGEKQYLAAPLVMLKMEPNGKLQPMVIQIQPPNPSSPTPTLFLPSDPPLAWLLAKSWVRNSDFQLHEIQYHLLNTHLVAEVIAVATMRCLPGLHPIFKFLIPHIRYTMEINTRARTQLISDGGIFDKAVSTGGGGHVQLLRRAAAQLTYCSLCPPDDLADRGLLGLPGALYAHDALRLWEIIARYVEGIVHLFYQRDDIVKGDPELQAWCREITEVGLCQAQDRGFPVSFQSQSQLCHFLTMCVFTCTAQHAAINQGQLDWYAWVPNAPCTMRMPPPTTKEDVTMATVMGSLPDVRQACLQMAISWHLSRRQPDMVPLGHHKEKYFSGPKPKAVLNQFRTDLEKLEKEITARNEQLDWPYEYLKPSCIENSVTI.

The PLAT domain maps to G2 to R114. Residues L115–I663 form the Lipoxygenase domain. S246 bears the Phosphoserine mark. The Fe cation site is built by H360, H365, H540, N544, and I663.

This sequence belongs to the lipoxygenase family. Requires Fe cation as cofactor. Expressed in vascular smooth muscle cells.

It localises to the cytoplasm. Its subcellular location is the cytosol. The protein localises to the membrane. The catalysed reaction is (5Z,8Z,11Z,14Z)-eicosatetraenoate + O2 = (12S)-hydroperoxy-(5Z,8Z,10E,14Z)-eicosatetraenoate. The enzyme catalyses (5Z,8Z,11Z,14Z)-eicosatetraenoate + O2 = (15S)-hydroperoxy-(5Z,8Z,11Z,13E)-eicosatetraenoate. It carries out the reaction 2 leukotriene A4 + O2 + 2 H2O = 2 lipoxin A4. It catalyses the reaction 2 leukotriene A4 + O2 + 2 H2O = 2 lipoxin B4. The catalysed reaction is (14S)-hydroperoxy-(4Z,7Z,10Z,12E,16Z,19Z)-docosahexaenoate = (13S,14S)-epoxy-(4Z,7Z,9E,11E,16Z,19Z)-docosahexaenoate + H2O. The enzyme catalyses N-(5Z,8Z,11Z,14Z)-eicosatetraenoyl-L-alanine + O2 = N-(15S)-hydroperoxy-(5Z,8Z,11Z,13E)-eicosatetraenoyl-alanine. It carries out the reaction N-(5Z,8Z,11Z,14Z)-eicosatetraenoyl-L-alanine + O2 = N-(12S)-hydroperoxy-(5Z,8Z,10E,14Z)-eicosatetraenoyl-alanine. It catalyses the reaction N-(5Z,8Z,11Z,14Z)-eicosatetraenoyl-gamma-aminobutanoate + O2 = N-(15S)-hydroperoxy-(5Z,8Z,11Z,13E)-eicosatetraenoyl-gamma-aminobutanoate. The catalysed reaction is N-(5Z,8Z,11Z,14Z)-eicosatetraenoyl-gamma-aminobutanoate + O2 = N-(12S)-hydroperoxy-(5Z,8Z,10E,14Z)-eicosatetraenoyl-gamma-aminobutanoate. The enzyme catalyses N-(5Z,8Z,11Z,14Z)-eicosatetraenoyl-glycine + O2 = N-(15S)-hydroperoxy-(5Z,8Z,11Z,13E)-eicosatetraenoyl-glycine. It carries out the reaction N-(5Z,8Z,11Z,14Z)-eicosatetraenoyl-glycine + O2 = N-(12S)-hydroperoxy-(5Z,8Z,10E,14Z)-eicosatetraenoyl-glycine. It catalyses the reaction N-(5Z,8Z,11Z,14Z)-eicosatetraenoyl-taurine + O2 = N-(12S)-hydroperoxy-(5Z,8Z,10E,14Z)-eicosatetraenoyl-taurine. The catalysed reaction is N-(5Z,8Z,11Z,14Z)-eicosatetraenoyl-taurine + O2 = N-(15S)-hydroperoxy-(5Z,8Z,11Z,13E)-eicosatetraenoyl-taurine. The enzyme catalyses (4Z,7Z,10Z,13Z,16Z,19Z)-docosahexaenoate + O2 = (14S)-hydroperoxy-(4Z,7Z,10Z,12E,16Z,19Z)-docosahexaenoate. It carries out the reaction (7S)-hydroperoxy-(4Z,8E,10Z,13Z,16Z,19Z)-docosahexaenoate + O2 = (7S,14S)-dihydroperoxy-(4Z,8E,10Z,12E,16Z,19Z)-docosahexaenoate. It catalyses the reaction (7S)-hydroperoxy-(4Z,8E,10Z,13Z,16Z,19Z)-docosahexaenoate + O2 = (7S,17S)-dihydroperoxy-(4Z,8E,10Z,13Z,15E,19Z)-docosahexaenoate. The catalysed reaction is (5Z,8Z,11Z,14Z,17Z)-eicosapentaenoate + O2 = (12S)-hydroperoxy-(5Z,8Z,10E,14Z,17Z)-eicosapentaenoate. The enzyme catalyses (8Z,11Z,14Z)-eicosatrienoate + O2 = (12S)-hydroperoxy-(8Z,10E,14Z)-eicosatrienoate. It carries out the reaction (9Z,12Z)-octadecadienoate + O2 = (13S)-hydroperoxy-(9Z,11E)-octadecadienoate. It catalyses the reaction (5Z,8Z,11Z)-eicosatrienoate + O2 = (12S)-hydroperoxy-(5Z,8Z,10E)-eicosatrienoate. The catalysed reaction is (14R,15S)-epoxy-(5Z,8Z,11Z)-eicosatrienoate + O2 = (12S)-hydroperoxy-(14R,15S)-epoxy-(5Z,8Z,10E)-eicosatrienoate. The enzyme catalyses (14S,15R)-epoxy-(5Z,8Z,11Z)-eicosatrienoate + O2 = (12S)-hydroperoxy-(14S,15R)-epoxy-(5Z,8Z,10E)-eicosatrienoate. Its pathway is lipid metabolism; hydroperoxy eicosatetraenoic acid biosynthesis. Its activity is regulated as follows. Activated by EGF. Arachidonic acid conversion is inhibited by (13S,14S)-epoxy-(4Z,7Z,9E,11E,16Z,19Z)-docosahexaenoate (13S,14S-epoxy-DHA). Arachidonate 12-lipoxygenase activity is decreased when PH decreases from 7.4 to 6. Functionally, catalyzes the regio and stereo-specific incorporation of molecular oxygen into free and esterified polyunsaturated fatty acids generating lipid hydroperoxides that can be further reduced to the corresponding hydroxy species. Mainly converts arachidonate ((5Z,8Z,11Z,14Z)-eicosatetraenoate) to the specific bioactive lipid (12S)-hydroperoxyeicosatetraenoate/(12S)-HPETE. Through the production of bioactive lipids like (12S)-HPETE it regulates different biological processes including platelet activation. It can also catalyze the epoxidation of double bonds of polyunsaturated fatty acids such as (14S)-hydroperoxy-docosahexaenoate/(14S)-HPDHA resulting in the formation of (13S,14S)-epoxy-DHA. Furthermore, it may participate in the sequential oxidations of DHA ((4Z,7Z,10Z,13Z,16Z,19Z)-docosahexaenoate) to generate specialized pro-resolving mediators (SPMs) like resolvin D5 ((7S,17S)-diHPDHA) and (7S,14S)-diHPDHA, that actively down-regulate the immune response and have anti-aggregation properties with platelets. An additional function involves a multistep process by which it transforms leukotriene A4/LTA4 into the bioactive lipids lipoxin A4/LXA4 and lipoxin B4/LXB4, both are vasoactive and LXA4 may regulate neutrophil function via occupancy of specific recognition sites. Can also peroxidize linoleate ((9Z,12Z)-octadecadienoate) to (13S)-hydroperoxyoctadecadienoate/ (13S-HPODE). Due to its role in regulating both the expression of the vascular endothelial growth factor (VEGF, an angiogenic factor involved in the survival and metastasis of solid tumors) and the expression of integrin beta-1 (known to affect tumor cell migration and proliferation), it can be regarded as protumorigenic. Important for cell survival, as it may play a role not only in proliferation but also in the prevention of apoptosis in vascular smooth muscle cells. The polypeptide is Polyunsaturated fatty acid lipoxygenase ALOX12 (Homo sapiens (Human)).